Consider the following 350-residue polypeptide: Derriere protein (350 aa).

The first 16 residues, 1–16, serve as a signal peptide directing secretion; sequence MLSLACFFSFLLMVKS. Residues 17-236 constitute a propeptide that is removed on maturation; that stretch reads SPLTFQERML…SSCKTPRAKR (220 aa). N171 and N202 each carry an N-linked (GlcNAc...) asparagine glycan. 3 disulfides stabilise this stretch: C249–C315, C278–C347, and C282–C349.

This sequence belongs to the TGF-beta family. As to quaternary structure, homodimer; disulfide-linked. Also forms heterodimers with other TGF-beta family members including nodal2/nr-2 and bmp4.

The protein resides in the secreted. In terms of biological role, required for posterior mesoderm formation during embryogenesis. Acts indirectly to suppress head formation by altering mesodermal patterning. Also involved in the establishment of left-right axis asymmetry, acting upstream of nodal/nr-1. Can exert long-range effects in the embryo. This Xenopus tropicalis (Western clawed frog) protein is Derriere protein.